A 308-amino-acid polypeptide reads, in one-letter code: C-4 methylsterol oxidase (308 aa).

A helical membrane pass occupies residues 56–76 (LLFFLTHEIFYFGRCLPWAII). A Fatty acid hydroxylase domain is found at 145-282 (WAVFFVLEDT…FRWWDFILDT (138 aa)). A Histidine box-1 motif is present at residues 160–164 (HRGLH). The Histidine box-2 motif lies at 173–177 (HKQHH). The Histidine box-3 motif lies at 257-263 (HHDEHHH).

This sequence belongs to the sterol desaturase family. Fe cation serves as cofactor.

The protein localises to the endoplasmic reticulum membrane. It carries out the reaction 4,4-dimethyl-5alpha-cholest-7-en-3beta-ol + 6 Fe(II)-[cytochrome b5] + 3 O2 + 5 H(+) = 4alpha-carboxy-4beta-methyl-5alpha-cholest-7-ene-3beta-ol + 6 Fe(III)-[cytochrome b5] + 4 H2O. The protein operates within steroid biosynthesis; zymosterol biosynthesis; zymosterol from lanosterol: step 3/6. C-4 methylsterol oxidase; part of the third module of ergosterol biosynthesis pathway that includes the late steps of the pathway. ERG25 is a catalytic component of the C-4 demethylation complex that catalyzes the conversion of 4,4-dimethylfecosterol into fecosterol via 4-methylfecosterol. Catalyzes the three-step monooxygenation required for the demethylation of 4,4-dimethyl and 4alpha-methylsterols. The third module or late pathway involves the ergosterol synthesis itself through consecutive reactions that mainly occur in the endoplasmic reticulum (ER) membrane. Firstly, the squalene synthase ERG9 catalyzes the condensation of 2 farnesyl pyrophosphate moieties to form squalene, which is the precursor of all steroids. Squalene synthase is crucial for balancing the incorporation of farnesyl diphosphate (FPP) into sterol and nonsterol isoprene synthesis. Secondly, the squalene epoxidase ERG1 catalyzes the stereospecific oxidation of squalene to (S)-2,3-epoxysqualene, which is considered to be a rate-limiting enzyme in steroid biosynthesis. Then, the lanosterol synthase ERG7 catalyzes the cyclization of (S)-2,3 oxidosqualene to lanosterol, a reaction that forms the sterol core. In the next steps, lanosterol is transformed to zymosterol through a complex process involving various demethylation, reduction and desaturation reactions. The lanosterol 14-alpha-demethylase ERG11 (also known as CYP51) catalyzes C14-demethylation of lanosterol to produce 4,4'-dimethyl cholesta-8,14,24-triene-3-beta-ol, which is critical for ergosterol biosynthesis. The C-14 reductase ERG24 reduces the C14=C15 double bond of 4,4-dimethyl-cholesta-8,14,24-trienol to produce 4,4-dimethyl-cholesta-8,24-dienol. 4,4-dimethyl-cholesta-8,24-dienol is substrate of the C-4 demethylation complex ERG25-ERG26-ERG27 in which ERG25 catalyzes the three-step monooxygenation required for the demethylation of 4,4-dimethyl and 4alpha-methylsterols, ERG26 catalyzes the oxidative decarboxylation that results in a reduction of the 3-beta-hydroxy group at the C-3 carbon to an oxo group, and ERG27 is responsible for the reduction of the keto group on the C-3. ERG28 has a role as a scaffold to help anchor ERG25, ERG26 and ERG27 to the endoplasmic reticulum and ERG29 regulates the activity of the iron-containing C4-methylsterol oxidase ERG25. Then, the sterol 24-C-methyltransferase ERG6 catalyzes the methyl transfer from S-adenosyl-methionine to the C-24 of zymosterol to form fecosterol. The C-8 sterol isomerase ERG2 catalyzes the reaction which results in unsaturation at C-7 in the B ring of sterols and thus converts fecosterol to episterol. The sterol-C5-desaturase ERG3 then catalyzes the introduction of a C-5 double bond in the B ring to produce 5-dehydroepisterol. The C-22 sterol desaturase ERG5 further converts 5-dehydroepisterol into ergosta-5,7,22,24(28)-tetraen-3beta-ol by forming the C-22(23) double bond in the sterol side chain. Finally, ergosta-5,7,22,24(28)-tetraen-3beta-ol is substrate of the C-24(28) sterol reductase ERG4 to produce ergosterol. This Candida albicans (strain SC5314 / ATCC MYA-2876) (Yeast) protein is C-4 methylsterol oxidase.